Reading from the N-terminus, the 228-residue chain is L-ribulose-5-phosphate 4-epimerase UlaF (228 aa).

Residues 26-27 (GN), 43-44 (SG), and 72-73 (SS) each bind substrate. Residues aspartate 74, histidine 93, and histidine 95 each coordinate Zn(2+). Catalysis depends on aspartate 118, which acts as the Proton donor/acceptor. Zn(2+) is bound at residue histidine 167. Tyrosine 225 serves as the catalytic Proton donor/acceptor.

It belongs to the aldolase class II family. AraD/FucA subfamily. Zn(2+) is required as a cofactor.

It carries out the reaction L-ribulose 5-phosphate = D-xylulose 5-phosphate. Its pathway is cofactor degradation; L-ascorbate degradation; D-xylulose 5-phosphate from L-ascorbate: step 4/4. Its function is as follows. Catalyzes the isomerization of L-ribulose 5-phosphate to D-xylulose 5-phosphate. Is involved in the anaerobic L-ascorbate utilization. The polypeptide is L-ribulose-5-phosphate 4-epimerase UlaF (Escherichia fergusonii (strain ATCC 35469 / DSM 13698 / CCUG 18766 / IAM 14443 / JCM 21226 / LMG 7866 / NBRC 102419 / NCTC 12128 / CDC 0568-73)).